A 127-amino-acid polypeptide reads, in one-letter code: Large ribosomal subunit protein bL17 (127 aa).

It belongs to the bacterial ribosomal protein bL17 family. In terms of assembly, part of the 50S ribosomal subunit. Contacts protein L32.

This Stenotrophomonas maltophilia (strain R551-3) protein is Large ribosomal subunit protein bL17.